A 212-amino-acid chain; its full sequence is Uracil phosphoribosyltransferase (212 aa).

Residues R78, R103, and 130–138 (DPMLATGSS) contribute to the 5-phospho-alpha-D-ribose 1-diphosphate site. Uracil contacts are provided by residues I193 and 198–200 (GDA). D199 serves as a coordination point for 5-phospho-alpha-D-ribose 1-diphosphate.

It belongs to the UPRTase family. It depends on Mg(2+) as a cofactor.

It carries out the reaction UMP + diphosphate = 5-phospho-alpha-D-ribose 1-diphosphate + uracil. The protein operates within pyrimidine metabolism; UMP biosynthesis via salvage pathway; UMP from uracil: step 1/1. With respect to regulation, allosterically activated by GTP. Its function is as follows. Catalyzes the conversion of uracil and 5-phospho-alpha-D-ribose 1-diphosphate (PRPP) to UMP and diphosphate. This chain is Uracil phosphoribosyltransferase, found in Pseudomonas syringae pv. tomato (strain ATCC BAA-871 / DC3000).